The following is a 368-amino-acid chain: BTB/POZ and TAZ domain-containing protein 5 (368 aa).

The interval 1 to 25 is disordered; the sequence is MENMDDFSPENVLAPPPPPPPMKKS. Residues 55 to 123 form the BTB domain; it reads ADVLIHTDDN…LYSSCYEKQD (69 aa). Residues 233 to 324 form a TAZ-type zinc finger; sequence QTYTQLYEAM…SEQCKVPLCS (92 aa). The interval 335 to 358 is caM-binding; it reads RKDEKRWKLLVRNVLSTKRIGGSP.

As to quaternary structure, interacts with CUL3A. Preferentially expressed in young leaves, roots and stems.

It localises to the cytoplasm. It functions in the pathway protein modification; protein ubiquitination. Its function is as follows. May act as a substrate-specific adapter of an E3 ubiquitin-protein ligase complex (CUL3-RBX1-BTB) which mediates the ubiquitination and subsequent proteasomal degradation of target proteins. In Arabidopsis thaliana (Mouse-ear cress), this protein is BTB/POZ and TAZ domain-containing protein 5 (BT5).